The chain runs to 81 residues: RNA-binding protein Hfq (81 aa).

One can recognise a Sm domain in the interval 10 to 70; sequence DLFLNSVRKS…ISTIMPSQPV (61 aa).

This sequence belongs to the Hfq family. In terms of assembly, homohexamer.

Its function is as follows. RNA chaperone that binds small regulatory RNA (sRNAs) and mRNAs to facilitate mRNA translational regulation in response to envelope stress, environmental stress and changes in metabolite concentrations. Also binds with high specificity to tRNAs. The protein is RNA-binding protein Hfq of Mesorhizobium japonicum (strain LMG 29417 / CECT 9101 / MAFF 303099) (Mesorhizobium loti (strain MAFF 303099)).